The following is a 493-amino-acid chain: Glutamyl-tRNA(Gln) amidotransferase subunit A (493 aa).

Active-site charge relay system residues include K78 and S158. Residue S182 is the Acyl-ester intermediate of the active site.

Belongs to the amidase family. GatA subfamily. As to quaternary structure, heterotrimer of A, B and C subunits.

The enzyme catalyses L-glutamyl-tRNA(Gln) + L-glutamine + ATP + H2O = L-glutaminyl-tRNA(Gln) + L-glutamate + ADP + phosphate + H(+). Functionally, allows the formation of correctly charged Gln-tRNA(Gln) through the transamidation of misacylated Glu-tRNA(Gln) in organisms which lack glutaminyl-tRNA synthetase. The reaction takes place in the presence of glutamine and ATP through an activated gamma-phospho-Glu-tRNA(Gln). This is Glutamyl-tRNA(Gln) amidotransferase subunit A from Beijerinckia indica subsp. indica (strain ATCC 9039 / DSM 1715 / NCIMB 8712).